Here is a 117-residue protein sequence, read N- to C-terminus: Large ribosomal subunit protein uL18 (117 aa).

It belongs to the universal ribosomal protein uL18 family. In terms of assembly, part of the 50S ribosomal subunit; part of the 5S rRNA/L5/L18/L25 subcomplex. Contacts the 5S and 23S rRNAs.

Functionally, this is one of the proteins that bind and probably mediate the attachment of the 5S RNA into the large ribosomal subunit, where it forms part of the central protuberance. The polypeptide is Large ribosomal subunit protein uL18 (Aliivibrio fischeri (strain MJ11) (Vibrio fischeri)).